The following is a 211-amino-acid chain: Small ribosomal subunit protein eS1 (211 aa).

It belongs to the eukaryotic ribosomal protein eS1 family.

The chain is Small ribosomal subunit protein eS1 from Archaeoglobus fulgidus (strain ATCC 49558 / DSM 4304 / JCM 9628 / NBRC 100126 / VC-16).